We begin with the raw amino-acid sequence, 1522 residues long: Myosin-15 (1522 aa).

Residues 12–61 (RKGDKVWVEDKDLAWIAADVLDSFDNKLHVETSTGKKVFVSPEKLFRRDP) form the Myosin N-terminal SH3-like domain. Residues 67–737 (NGVDDMTKLT…QIGILDSRRA (671 aa)) form the Myosin motor domain. Residues 161-168 (GESGAGKT) and 214-222 (NDNSSRFGK) each bind ATP. 4 actin-binding regions span residues 499 to 533 (LIEK…FQNF), 535 to 558 (FHPR…AGKV), 593 to 618 (FPSA…KQQL), and 618 to 640 (LQAL…KPNS). IQ domains follow at residues 763–792 (ARAS…AAAA), 788–817 (NAAA…AAIV), 811–840 (LVSA…HRAA), 836–865 (EHRA…SIIA), and 859–888 (RQSS…VANE). Residues 889–1059 (AGALRLAKTK…NQVLMQKTLI (171 aa)) are a coiled coil. A Dilute domain is found at 1164-1456 (NIIIEGINEA…VSQMRVLVDK (293 aa)).

Belongs to the TRAFAC class myosin-kinesin ATPase superfamily. Myosin family. Plant myosin class XI subfamily. As to quaternary structure, homodimer. Interacts with MYOB1 and MYOB7. Interacts with WIT1 and WIT2. Core component of the LINC complex which is composed of inner nuclear membrane SUN domain-containing proteins coupled to outer nuclear membrane WIP and WIT proteins. The LINC complex also involves nucleoskeletal proteins CRWN/LINC and possibly KAKU4 and the cytoskeletal myosin KAKU1.

Its subcellular location is the cytoplasm. It is found in the nucleus membrane. Myosin heavy chain that is required for the cell cycle-regulated transport of various organelles and proteins for their segregation. Functions by binding with its tail domain to receptor proteins on organelles and exerting force with its N-terminal motor domain against actin filaments, thereby transporting its cargo along polarized actin cables. Involved in trafficking of Golgi stacks and mitochondria. Plays a role in nuclear shape determination. Drives nuclear movement along actin filaments. As component of the SUN-WIP-WIT2-KAKU1 complex, mediates the transfer of cytoplasmic forces to the nuclear envelope (NE), leading to nuclear shape changes. This Arabidopsis thaliana (Mouse-ear cress) protein is Myosin-15 (XI-I).